Here is a 288-residue protein sequence, read N- to C-terminus: Pyrroline-5-carboxylate reductase 3 (288 aa).

This sequence belongs to the pyrroline-5-carboxylate reductase family. In terms of assembly, homodecamer; composed of 5 homodimers.

The protein resides in the cytoplasm. The catalysed reaction is L-proline + NADP(+) = (S)-1-pyrroline-5-carboxylate + NADPH + 2 H(+). It carries out the reaction L-proline + NAD(+) = (S)-1-pyrroline-5-carboxylate + NADH + 2 H(+). It participates in amino-acid biosynthesis; L-proline biosynthesis; L-proline from L-glutamate 5-semialdehyde: step 1/1. Oxidoreductase that catalyzes the last step in proline biosynthesis, which corresponds to the reduction of pyrroline-5-carboxylate (P5C) to L-proline using NAD(P)H. Proline is synthesized from either glutamate or ornithine; both are converted to P5C, and then to proline via pyrroline-5-carboxylate reductases (PYCRs). PYCR3 is exclusively linked to the biosynthesis of proline from ornithine. In Danio rerio (Zebrafish), this protein is Pyrroline-5-carboxylate reductase 3.